The following is a 738-amino-acid chain: 1,4-alpha-glucan branching enzyme GlgB (738 aa).

The Nucleophile role is filled by aspartate 417. Glutamate 472 serves as the catalytic Proton donor.

The protein belongs to the glycosyl hydrolase 13 family. GlgB subfamily. In terms of assembly, monomer.

It carries out the reaction Transfers a segment of a (1-&gt;4)-alpha-D-glucan chain to a primary hydroxy group in a similar glucan chain.. It participates in glycan biosynthesis; glycogen biosynthesis. Functionally, catalyzes the formation of the alpha-1,6-glucosidic linkages in glycogen by scission of a 1,4-alpha-linked oligosaccharide from growing alpha-1,4-glucan chains and the subsequent attachment of the oligosaccharide to the alpha-1,6 position. This is 1,4-alpha-glucan branching enzyme GlgB from Burkholderia pseudomallei (strain 1106a).